Consider the following 156-residue polypeptide: Small ribosomal subunit protein uS7 (156 aa).

This sequence belongs to the universal ribosomal protein uS7 family. As to quaternary structure, part of the 30S ribosomal subunit. Contacts proteins S9 and S11.

Functionally, one of the primary rRNA binding proteins, it binds directly to 16S rRNA where it nucleates assembly of the head domain of the 30S subunit. Is located at the subunit interface close to the decoding center, probably blocks exit of the E-site tRNA. The chain is Small ribosomal subunit protein uS7 from Polynucleobacter asymbioticus (strain DSM 18221 / CIP 109841 / QLW-P1DMWA-1) (Polynucleobacter necessarius subsp. asymbioticus).